A 227-amino-acid chain; its full sequence is NAD(P)H-quinone oxidoreductase subunit K, chloroplastic (227 aa).

[4Fe-4S] cluster contacts are provided by C43, C44, C108, and C139.

Belongs to the complex I 20 kDa subunit family. As to quaternary structure, NDH is composed of at least 16 different subunits, 5 of which are encoded in the nucleus. [4Fe-4S] cluster is required as a cofactor.

It is found in the plastid. The protein resides in the chloroplast thylakoid membrane. The catalysed reaction is a plastoquinone + NADH + (n+1) H(+)(in) = a plastoquinol + NAD(+) + n H(+)(out). It carries out the reaction a plastoquinone + NADPH + (n+1) H(+)(in) = a plastoquinol + NADP(+) + n H(+)(out). Functionally, NDH shuttles electrons from NAD(P)H:plastoquinone, via FMN and iron-sulfur (Fe-S) centers, to quinones in the photosynthetic chain and possibly in a chloroplast respiratory chain. The immediate electron acceptor for the enzyme in this species is believed to be plastoquinone. Couples the redox reaction to proton translocation, and thus conserves the redox energy in a proton gradient. The protein is NAD(P)H-quinone oxidoreductase subunit K, chloroplastic of Pelargonium hortorum (Common geranium).